A 221-amino-acid chain; its full sequence is Epididymal secretory glutathione peroxidase (221 aa).

Positions 1–21 are cleaved as a signal peptide; it reads MAIQLRVFYLVPLLLASYVQT. Cysteine 73 is a catalytic residue.

The protein belongs to the glutathione peroxidase family. In terms of tissue distribution, epididymis.

It localises to the secreted. It catalyses the reaction 2 glutathione + H2O2 = glutathione disulfide + 2 H2O. Its function is as follows. Protects cells and enzymes from oxidative damage, by catalyzing the reduction of hydrogen peroxide, lipid peroxides and organic hydroperoxide, by glutathione. May constitute a glutathione peroxidase-like protective system against peroxide damage in sperm membrane lipids. This is Epididymal secretory glutathione peroxidase (Gpx5) from Rattus norvegicus (Rat).